The following is a 359-amino-acid chain: Glutamine synthetase (359 aa).

The GS beta-grasp domain occupies 28–107 (VMAEYIWIDG…VLAACYTADG (80 aa)). The region spanning 114–359 (HRDACAKLLE…GIITETMFEH (246 aa)) is the GS catalytic domain. Ser273 is modified (phosphoserine). Position 303 is a phosphothreonine (Thr303). Ser305 carries the post-translational modification Phosphoserine.

It belongs to the glutamine synthetase family. Homooctamer.

Its subcellular location is the cytoplasm. It carries out the reaction L-glutamate + NH4(+) + ATP = L-glutamine + ADP + phosphate + H(+). This is Glutamine synthetase (gln1) from Schizosaccharomyces pombe (strain 972 / ATCC 24843) (Fission yeast).